Reading from the N-terminus, the 446-residue chain is MREIVHLQIGQCGNQIGAKFWEVISDEHGIDIAGNYCGNASLQLERINVYFNEAYSHKYVPRSILVDLEPGTMDSVRSSKIGPLFRPDNFIHGNSGAGNNWAKGHYTEGAELIENVMDVVRNECESCDCLQGFQLIHSLGGGTGSGMGTLLINKIREEYPDRIMNTFSVVPSPKVSDTVVEPYNAILSIHQLIENTDETFCIDNEALYDICFRTLKLTNPTYGDLNHLVSLTMSGVTTSLRFPGQLNADLRKLAVNMVPFPRLHFFMPGFAPLTARGSQQYRALSVPELTQQMFDARNMMAACDPRRGRYLTVACIFRGRMSTREVDEQLLSVQTKNSSYFVEWIPNNVKVAVCDIPPRGLKMAATFIGNNTAIQELFIRVSEQFSAMFRRKAFLHWYTGEGMDEMEFSEAEGNTNDLVSEYQQYQDATADVEEYEEAEASPEKET.

Residues 1–4 carry the MREI motif motif; the sequence is MREI. Positions 11, 69, 138, 142, 143, 144, 204, and 226 each coordinate GTP. Glu69 contributes to the Mg(2+) binding site. Positions 419-446 are disordered; it reads VSEYQQYQDATADVEEYEEAEASPEKET. The span at 430-440 shows a compositional bias: acidic residues; it reads ADVEEYEEAEA.

It belongs to the tubulin family. Dimer of alpha and beta chains. A typical microtubule is a hollow water-filled tube with an outer diameter of 25 nm and an inner diameter of 15 nM. Alpha-beta heterodimers associate head-to-tail to form protofilaments running lengthwise along the microtubule wall with the beta-tubulin subunit facing the microtubule plus end conferring a structural polarity. Microtubules usually have 13 protofilaments but different protofilament numbers can be found in some organisms and specialized cells. Mg(2+) serves as cofactor. In terms of processing, some glutamate residues at the C-terminus are polyglycylated, resulting in polyglycine chains on the gamma-carboxyl group. Glycylation is mainly limited to tubulin incorporated into axonemes (cilia and flagella) whereas glutamylation is prevalent in neuronal cells, centrioles, axonemes, and the mitotic spindle. Both modifications can coexist on the same protein on adjacent residues, and lowering polyglycylation levels increases polyglutamylation, and reciprocally. The precise function of polyglycylation is still unclear. Some glutamate residues at the C-terminus are polyglutamylated, resulting in polyglutamate chains on the gamma-carboxyl group. Polyglutamylation plays a key role in microtubule severing by spastin (SPAST). SPAST preferentially recognizes and acts on microtubules decorated with short polyglutamate tails: severing activity by SPAST increases as the number of glutamates per tubulin rises from one to eight, but decreases beyond this glutamylation threshold. In terms of tissue distribution, highly expressed in bone marrow.

The protein localises to the cytoplasm. The protein resides in the cytoskeleton. Functionally, tubulin is the major constituent of microtubules, a cylinder consisting of laterally associated linear protofilaments composed of alpha- and beta-tubulin heterodimers. Microtubules grow by the addition of GTP-tubulin dimers to the microtubule end, where a stabilizing cap forms. Below the cap, tubulin dimers are in GDP-bound state, owing to GTPase activity of alpha-tubulin. The protein is Tubulin beta-6 chain of Gallus gallus (Chicken).